A 456-amino-acid chain; its full sequence is Tyrosine phenol-lyase (456 aa).

N6-(pyridoxal phosphate)lysine is present on lysine 257.

This sequence belongs to the beta-eliminating lyase family. Homotetramer. Pyridoxal 5'-phosphate is required as a cofactor. In terms of processing, contains L-DOPA (3',4'-dihydroxyphenylalanine).

Its subcellular location is the cytoplasm. The enzyme catalyses L-tyrosine + H2O = phenol + pyruvate + NH4(+). The polypeptide is Tyrosine phenol-lyase (tpl) (Enterobacter agglomerans (Erwinia herbicola)).